Reading from the N-terminus, the 232-residue chain is Chromosome partition protein MukE (232 aa).

The tract at residues 203–232 (HTKEPSQGSLLSEEDQEEQAQEEMTEEGEA) is disordered. Positions 214-232 (SEEDQEEQAQEEMTEEGEA) are enriched in acidic residues.

This sequence belongs to the MukE family. In terms of assembly, interacts, and probably forms a ternary complex, with MukF and MukB. The complex formation is stimulated by calcium or magnesium.

The protein resides in the cytoplasm. Its subcellular location is the nucleoid. In terms of biological role, involved in chromosome condensation, segregation and cell cycle progression. May participate in facilitating chromosome segregation by condensation DNA from both sides of a centrally located replisome during cell division. Probably acts via its interaction with MukB and MukF. The sequence is that of Chromosome partition protein MukE from Vibrio parahaemolyticus serotype O3:K6 (strain RIMD 2210633).